The following is a 221-amino-acid chain: Small ribosomal subunit protein uS5 (221 aa).

The S5 DRBM domain occupies 46-109 (LKDEVIDIKR…INAKLNIMEI (64 aa)).

This sequence belongs to the universal ribosomal protein uS5 family. As to quaternary structure, part of the 30S ribosomal subunit. Contacts protein S4.

In terms of biological role, with S4 and S12 plays an important role in translational accuracy. The polypeptide is Small ribosomal subunit protein uS5 (Thermoplasma acidophilum (strain ATCC 25905 / DSM 1728 / JCM 9062 / NBRC 15155 / AMRC-C165)).